We begin with the raw amino-acid sequence, 332 residues long: MPGPLRVLITGAAGQIAYNLSNMVANGNLFGKDQKIILHLLDIPEAKTVLEGVVMELQDCAFTVLEGIVPTHCLKEAFTDIDVALMVGAMPRKQGMERRDLLSSNVKIFKDQGEALEKYAKKTVKVLVVGNPANTNCLIMSKYAPSIPKENFTALSRLDHNRAIYQVAAKVGVPSECVKNVCIWGNHSNKQFPDLAHAVVTKGGKQHPAKELINDEKWVKEVFTPCVQNRGAAVIGLRKLSSAASAAKAIVDQMHDWWFGTKEGEWVSMSVYSTGEHYGAPKDIYFSFPVTIKNGHYKVVDGLAMDEWGKGLFKITADELVDEREVALSSFK.

NAD(+) is bound by residues 11–17 (GAAGQIA) and aspartate 42. 2 residues coordinate substrate: arginine 92 and arginine 98. NAD(+) contacts are provided by residues asparagine 105, glutamine 112, and 129 to 131 (VGN). Residues asparagine 131 and arginine 162 each contribute to the substrate site. The Proton acceptor role is filled by histidine 187.

It belongs to the LDH/MDH superfamily. MDH type 2 family. Homodimer.

It localises to the cytoplasm. The catalysed reaction is (S)-malate + NAD(+) = oxaloacetate + NADH + H(+). By arsenate for both the forward and reverse reactions. Its function is as follows. Malate dehydrogenase. Has no activity with NADPH as substrate. Does not show lactate dehydrogenase activity. The protein is Malate dehydrogenase, cytoplasmic of Taenia solium (Pork tapeworm).